Reading from the N-terminus, the 256-residue chain is Homeobox-leucine zipper protein HOX18 (256 aa).

Residues 52 to 117 form a disordered region; it reads YDHGRDEEQA…GGGGGTRKKL (66 aa). Gly residues predominate over residues 102-112; that stretch reads DGGSGSGGGGG. Residues 112–171 constitute a DNA-binding region (homeobox); sequence GTRKKLQLTKEQSTLLEDSFRVHNILSHAQKHELARQLKLKPRQVEVWFQNRRARTKLKQ. Positions 170–214 are leucine-zipper; sequence KQTEVDCEFLKRCCESLTEENKQLKHELMELRRLASAAAAAAGSQ.

It belongs to the HD-ZIP homeobox family. Class II subfamily. In terms of tissue distribution, expressed in roots, leaf sheaths and blades and panicles.

It is found in the nucleus. Probable transcription factor. The protein is Homeobox-leucine zipper protein HOX18 (HOX18) of Oryza sativa subsp. indica (Rice).